An 876-amino-acid chain; its full sequence is Importin subunit beta-1 (876 aa).

An N-acetylmethionine modification is found at M1. 5 HEAT repeats span residues 3-29 (LITI…ERAA), 32-62 (NLPT…LQIK), 85-120 (ANAR…ACAE), 129-160 (LIPQ…ICQD), and 170-201 (SNEI…LLNS). S12 carries the post-translational modification Phosphoserine. One can recognise an Importin N-terminal domain in the interval 21–101 (AQKFLERAAV…KNYVLQTLGT (81 aa)). Position 211 is an N6-acetyllysine (K211). HEAT repeat units lie at residues 212 to 247 (ESER…IMSL), 260 to 302 (LFAI…EAAE), 314 to 359 (YAKG…STCC), 363 to 392 (IVPH…AFGS), 399 to 438 (PNQL…ICEL), 449 to 485 (LAPL…YEAA), 500 to 537 (SSSF…EIVK), 544 to 592 (YPAV…QNVL), 597 to 639 (HQDA…VEVL), 644 to 680 (LKYM…LCRA), 686 to 724 (LPFC…ALAI), 729 to 777 (KKYL…QGLK), 785 to 828 (PDVM…LCTA), and 834 to 875 (LKLV…LKNQ). The segment at 286–462 (VCDEEMDLAI…LQCLIEGLSA (177 aa)) is essential for high affinity interaction with RPL23A. The segment at 329-342 (TLTKQDENDDDDDW) is IAB-binding. The tract at residues 334–419 (DENDDDDDWN…MPTLIELMKD (86 aa)) is ran-GTP binding. N6-acetyllysine occurs at positions 835 and 867.

Belongs to the importin beta family. Importin beta-1 subfamily. In terms of assembly, forms a complex with an importin alpha subunit. Interacts with XPO1. Forms a heterodimer with IPO7. The KPNB1/IPO7 heterodimer interacts with H1 histone. Interacts with SNUPN. Interacts with H2A, H2B, H3 and H4 histones. Component of an import snRNP complex composed of KPNB1, SNUPN, SMN1 and ZNF259. Component of a nuclear export receptor complex composed of KPNB1, Ran, SNUPN and XPO1. Interacts with SRY. Interacts with PRKCI/atypical protein kinase C iota. Interacts with KPNA2. Interacts with KPNA7. Interacts with SNAI1 (via zinc fingers) and SNAI2 (via zinc fingers). Interacts with SLC35G1 and STIM1. Interacts with DCAF8. Interacts with RAN. Interacts with NUMA1 (via C-terminus); this interaction is inhibited by RanGTP. Interacts with ZBED1/hDREF; required for nuclear import of ZBED1/hDREF. Interacts with SRP19. Interacts with RPL23A (via BIB domain), RPS7 and RPL5. In terms of processing, mono-ADP-ribosylated by PARP16.

Its subcellular location is the cytoplasm. The protein localises to the nucleus envelope. Its function is as follows. Functions in nuclear protein import, either in association with an adapter protein, like an importin-alpha subunit, which binds to nuclear localization signals (NLS) in cargo substrates, or by acting as autonomous nuclear transport receptor. Acting autonomously, serves itself as NLS receptor. Docking of the importin/substrate complex to the nuclear pore complex (NPC) is mediated by KPNB1 through binding to nucleoporin FxFG repeats and the complex is subsequently translocated through the pore by an energy requiring, Ran-dependent mechanism. At the nucleoplasmic side of the NPC, Ran binds to importin-beta and the three components separate and importin-alpha and -beta are re-exported from the nucleus to the cytoplasm where GTP hydrolysis releases Ran from importin. The directionality of nuclear import is thought to be conferred by an asymmetric distribution of the GTP- and GDP-bound forms of Ran between the cytoplasm and nucleus. Mediates autonomously the nuclear import of ribosomal proteins RPL23A, RPS7 and RPL5. In association with IPO7, mediates the nuclear import of H1 histone. In vitro, mediates nuclear import of H2A, H2B, H3 and H4 histones. Imports MRTFA, SNAI1 and PRKCI into the nucleus. The polypeptide is Importin subunit beta-1 (Kpnb1) (Mus musculus (Mouse)).